The chain runs to 206 residues: Small ribosomal subunit protein uS4 (206 aa).

The 61-residue stretch at 96–156 folds into the S4 RNA-binding domain; that stretch reads SRLDNVVYRM…NKSKNQSRIK (61 aa).

This sequence belongs to the universal ribosomal protein uS4 family. Part of the 30S ribosomal subunit. Contacts protein S5. The interaction surface between S4 and S5 is involved in control of translational fidelity.

In terms of biological role, one of the primary rRNA binding proteins, it binds directly to 16S rRNA where it nucleates assembly of the body of the 30S subunit. With S5 and S12 plays an important role in translational accuracy. The polypeptide is Small ribosomal subunit protein uS4 (Buchnera aphidicola subsp. Acyrthosiphon pisum (strain 5A)).